We begin with the raw amino-acid sequence, 201 residues long: MKVVAFERKEQGTGASRRLRNAGKTTGIVYGGEAAPQMIELDHNALWHALKKEAFHSSILDLEVAGQSQQVLLRDVQYHPFKQLVLHVDFQRVDAKKKLHTKVPLHFLNAEVSPAVKLSSAIVSHVATEIEVECLPAALPEFLEVDLSKIEAGQSIHAKDIALPKGVALTAHVDAENPVIASATIPAGAVSDAAEGETPAA.

It belongs to the bacterial ribosomal protein bL25 family. CTC subfamily. As to quaternary structure, part of the 50S ribosomal subunit; part of the 5S rRNA/L5/L18/L25 subcomplex. Contacts the 5S rRNA. Binds to the 5S rRNA independently of L5 and L18.

This is one of the proteins that binds to the 5S RNA in the ribosome where it forms part of the central protuberance. In Burkholderia multivorans (strain ATCC 17616 / 249), this protein is Large ribosomal subunit protein bL25.